The primary structure comprises 293 residues: Small ribosomal subunit biogenesis GTPase RsgA (293 aa).

The region spanning 63-223 is the CP-type G domain; it reads KNELVRPPIA…VADTPGFSSL (161 aa). Residues 112–115 and 166–174 contribute to the GTP site; these read SKMD and GQSGVGKSS. Zn(2+)-binding residues include cysteine 247, cysteine 252, histidine 254, and cysteine 260.

This sequence belongs to the TRAFAC class YlqF/YawG GTPase family. RsgA subfamily. Monomer. Associates with 30S ribosomal subunit, binds 16S rRNA. It depends on Zn(2+) as a cofactor.

It localises to the cytoplasm. One of several proteins that assist in the late maturation steps of the functional core of the 30S ribosomal subunit. Helps release RbfA from mature subunits. May play a role in the assembly of ribosomal proteins into the subunit. Circularly permuted GTPase that catalyzes slow GTP hydrolysis, GTPase activity is stimulated by the 30S ribosomal subunit. This chain is Small ribosomal subunit biogenesis GTPase RsgA, found in Bacillus anthracis.